We begin with the raw amino-acid sequence, 32 residues long: Snake venom serine proteinase (32 aa).

Residues Val1–Asn32 form the Peptidase S1 domain.

This sequence belongs to the peptidase S1 family. Snake venom subfamily. As to quaternary structure, monomer. Post-translationally, contains 6 disulfide bonds. Glycosylated. As to expression, expressed by the venom gland.

It localises to the secreted. In terms of biological role, cleaves a kininogen analog with the release of kallidin (lysyl-bradykinin). Completely cleaves fibrinogen Aalpha chain, partially cleaves Bbeta chain and has no activity on gamma chain. This Bitis arietans (African puff adder) protein is Snake venom serine proteinase.